The primary structure comprises 294 residues: 33 kDa chaperonin (294 aa).

Cystine bridges form between C238–C240 and C271–C274.

It belongs to the HSP33 family. In terms of processing, under oxidizing conditions two disulfide bonds are formed involving the reactive cysteines. Under reducing conditions zinc is bound to the reactive cysteines and the protein is inactive.

The protein localises to the cytoplasm. In terms of biological role, redox regulated molecular chaperone. Protects both thermally unfolding and oxidatively damaged proteins from irreversible aggregation. Plays an important role in the bacterial defense system toward oxidative stress. This is 33 kDa chaperonin from Staphylococcus carnosus (strain TM300).